The sequence spans 283 residues: Polyamine aminopropyltransferase (283 aa).

In terms of domain architecture, PABS spans 5-238; the sequence is TTWIDEYHKG…GIWSWTFASS (234 aa). Gln32 is an S-methyl-5'-thioadenosine binding site. Positions 63 and 87 each coordinate spermidine. S-methyl-5'-thioadenosine contacts are provided by residues Glu107 and 139 to 140; that span reads DG. The active-site Proton acceptor is the Asp158. Residue 158–161 participates in spermidine binding; sequence DCSD.

The protein belongs to the spermidine/spermine synthase family. In terms of assembly, homodimer or homotetramer.

It localises to the cytoplasm. The enzyme catalyses S-adenosyl 3-(methylsulfanyl)propylamine + putrescine = S-methyl-5'-thioadenosine + spermidine + H(+). It participates in amine and polyamine biosynthesis; spermidine biosynthesis; spermidine from putrescine: step 1/1. Functionally, catalyzes the irreversible transfer of a propylamine group from the amino donor S-adenosylmethioninamine (decarboxy-AdoMet) to putrescine (1,4-diaminobutane) to yield spermidine. This chain is Polyamine aminopropyltransferase, found in Prochlorococcus marinus (strain AS9601).